The sequence spans 220 residues: MDYAKYIDHTLLKPDATLDQIDKLIDEAKEYHFKSVCINPTYVKHAAEALKDSDVLVCTVIGFPLGANTSATKAFEVEDAVKNGADELDMIINIGALKDGRYDEVRKDIEAVVKASGDHTVKVIIETVLLTDEEKRKASEISKEAGADFVKTSTGFAGGGATVEDVKLMKEVVGDDLEVKASGGVRNLEDFKAMIDAGATRVGASAGVQIIQGLESDSDY.

The Proton donor/acceptor role is filled by Asp-89. The Schiff-base intermediate with acetaldehyde role is filled by Lys-151. The active-site Proton donor/acceptor is the Lys-180.

It belongs to the DeoC/FbaB aldolase family. DeoC type 1 subfamily.

The protein localises to the cytoplasm. It catalyses the reaction 2-deoxy-D-ribose 5-phosphate = D-glyceraldehyde 3-phosphate + acetaldehyde. It functions in the pathway carbohydrate degradation; 2-deoxy-D-ribose 1-phosphate degradation; D-glyceraldehyde 3-phosphate and acetaldehyde from 2-deoxy-alpha-D-ribose 1-phosphate: step 2/2. Functionally, catalyzes a reversible aldol reaction between acetaldehyde and D-glyceraldehyde 3-phosphate to generate 2-deoxy-D-ribose 5-phosphate. The sequence is that of Deoxyribose-phosphate aldolase from Staphylococcus carnosus (strain TM300).